The primary structure comprises 272 residues: uncharacterized protein (272 aa).

It localises to the periplasm. In terms of biological role, may be involved in ulvan degradation. Ulvan is the main polysaccharide component of the Ulvales (green seaweed) cell wall. It is composed of disaccharide building blocks comprising 3-sulfated rhamnose (Rha3S) linked to D-glucuronic acid (GlcA), L-iduronic acid (IduA), or D-xylose (Xyl). This is an uncharacterized protein from Formosa agariphila (strain DSM 15362 / KCTC 12365 / LMG 23005 / KMM 3901 / M-2Alg 35-1).